Reading from the N-terminus, the 85-residue chain is Large ribosomal subunit protein bL27 (85 aa).

Positions 1-21 (MAHKKGGGSTHNGRDSKPKML) are disordered.

This sequence belongs to the bacterial ribosomal protein bL27 family.

The chain is Large ribosomal subunit protein bL27 from Albidiferax ferrireducens (strain ATCC BAA-621 / DSM 15236 / T118) (Rhodoferax ferrireducens).